Here is a 240-residue protein sequence, read N- to C-terminus: Large ribosomal subunit protein uL2 (240 aa).

Polar residues predominate over residues 1 to 11 (MGKRLISQNRG). Disordered stretches follow at residues 1–31 (MGKR…VKYR) and 206–240 (GGGR…TGRK). Composition is skewed to basic residues over residues 13 to 28 (GTPK…KGAV) and 224 to 240 (SPGR…TGRK).

It belongs to the universal ribosomal protein uL2 family. Part of the 50S ribosomal subunit. Forms a bridge to the 30S subunit in the 70S ribosome.

Functionally, one of the primary rRNA binding proteins. Required for association of the 30S and 50S subunits to form the 70S ribosome, for tRNA binding and peptide bond formation. It has been suggested to have peptidyltransferase activity; this is somewhat controversial. Makes several contacts with the 16S rRNA in the 70S ribosome. This chain is Large ribosomal subunit protein uL2, found in Methanococcus maripaludis (strain C6 / ATCC BAA-1332).